Consider the following 369-residue polypeptide: Cystathionine gamma-synthase (369 aa).

Lysine 200 is subject to N6-(pyridoxal phosphate)lysine.

It belongs to the trans-sulfuration enzymes family. Homotetramer. Requires pyridoxal 5'-phosphate as cofactor.

The protein localises to the cytoplasm. The catalysed reaction is O-succinyl-L-homoserine + L-cysteine = L,L-cystathionine + succinate + H(+). Catalyzes the formation of L-cystathionine from O-succinyl-L-homoserine (OSHS) and L-cysteine, via a gamma-replacement reaction. In the absence of thiol, catalyzes gamma-elimination to form 2-oxobutanoate, succinate and ammonia. In Haemophilus influenzae (strain ATCC 51907 / DSM 11121 / KW20 / Rd), this protein is Cystathionine gamma-synthase (metB).